A 1577-amino-acid polypeptide reads, in one-letter code: Vacuolar protein sorting/targeting protein PEP1 (1577 aa).

A signal peptide spans 1–21 (MILLHFVYSLWALLLIPLINA). At 22–1391 (EEFTPKVTKT…EFKEKYSVSA (1370 aa)) the chain is on the lumenal side. 2 BNR repeats span residues 58–68 (ISFDDGETWEK) and 101–111 (YITNDQGKSWE). Asn121 and Asn168 each carry an N-linked (GlcNAc...) asparagine glycan. BNR repeat units lie at residues 179-187 (SNDGGKSFS) and 414-423 (ISVDNGLTWT). Residue Asn445 is glycosylated (N-linked (GlcNAc...) asparagine). BNR repeat units lie at residues 485 to 495 (FISRDGGLTWK), 531 to 541 (YYSLDQGKTWT), and 762 to 771 (YISHDGGQTI). Asn791 is a glycosylation site (N-linked (GlcNAc...) asparagine). The BNR 8 repeat unit spans residues 859–869 (YLTNDGGETFT). The N-linked (GlcNAc...) asparagine glycan is linked to Asn1008. BNR repeat units lie at residues 1141 to 1150 (FFTTDGGETW) and 1183 to 1192 (YSTDFGKTWK). N-linked (GlcNAc...) asparagine glycosylation is present at Asn1301. A helical membrane pass occupies residues 1392-1412 (GPFAFIFISILLIIFFAAWFV). Topologically, residues 1413–1577 (YDRGIRRNGG…DSTAPSNENQ (165 aa)) are cytoplasmic. A disordered region spans residues 1531–1577 (DDVPTLEEEHTSYTDQPTTTDVPDALPEGNEENIDRPDSTAPSNENQ).

It belongs to the VPS10-related sortilin family.

Its subcellular location is the golgi apparatus. It is found in the trans-Golgi network membrane. The protein resides in the prevacuolar compartment membrane. Functionally, functions as a sorting receptor in the Golgi compartment required for the intracellular sorting and delivery of soluble vacuolar proteins, like carboxypeptidase Y (CPY) and proteinase A. Executes multiple rounds of sorting by cycling between the late Golgi and a prevacuolar endosome-like compartment. Binds the Golgi-modified P2 form of CPY, and this interaction is dependent on the presence of an intact CPY vacuolar protein sorting signal. This is Vacuolar protein sorting/targeting protein PEP1 (PEP1) from Saccharomyces cerevisiae (strain RM11-1a) (Baker's yeast).